The primary structure comprises 74 residues: Consomatin Ma1 (74 aa).

The first 22 residues, 1 to 22 (MQTAYWVMVMMMVWITAPLSEG), serve as a signal peptide directing secretion. A propeptide spanning residues 23–57 (GKLNGEIRGLVSHILIPQHTLRSLTSRDRSDNGGS) is cleaved from the precursor. Cys63 and Cys68 are oxidised to a cystine. Trp65 carries the post-translational modification D-tryptophan. 4-hydroxyproline occurs at positions 69, 70, and 72.

The protein belongs to the conotoxin C superfamily. Consomatin family. In terms of tissue distribution, expressed by the venom duct.

Its subcellular location is the secreted. Moderately activates human somatostatin receptors (SSTR) with a preferential activation of SSTR1 and SSTR4. In vivo, does not cause behavioral changes in mice within a few minutes of intracranial injection, but causes a progressive loss of movement thereafter. Four to five hours after injection, mice recover, even with the highest dose tested. Shows antinociception and antihyperalgesia activities in two mouse models of acute pain, most probably by acting outside the central nervous system. In Conus magus (Magical cone), this protein is Consomatin Ma1.